A 231-amino-acid chain; its full sequence is Aquaporin Z (231 aa).

Helical transmembrane passes span 9–29 (LLGT…AAAF) and 34–54 (IGFV…IYAV). Residues 63–65 (NPA) carry the NPA 1 motif. Transmembrane regions (helical) follow at residues 82–102 (IPYI…LYVI), 133–153 (SAIV…IGAT), and 160–180 (GFAP…SIPI). An NPA 2 motif is present at residues 186–188 (NPA). Residues 202–222 (LEQLWFFWVMPIIGGIVGGGI) traverse the membrane as a helical segment.

Belongs to the MIP/aquaporin (TC 1.A.8) family. In terms of assembly, homotetramer.

Its subcellular location is the cell inner membrane. The catalysed reaction is H2O(in) = H2O(out). Channel that permits osmotically driven movement of water in both directions. It is involved in the osmoregulation and in the maintenance of cell turgor during volume expansion in rapidly growing cells. It mediates rapid entry or exit of water in response to abrupt changes in osmolarity. The sequence is that of Aquaporin Z from Photorhabdus laumondii subsp. laumondii (strain DSM 15139 / CIP 105565 / TT01) (Photorhabdus luminescens subsp. laumondii).